A 197-amino-acid chain; its full sequence is Negative modulator of initiation of replication (197 aa).

The protein belongs to the SeqA family. As to quaternary structure, homodimer. Polymerizes to form helical filaments.

It localises to the cytoplasm. In terms of biological role, negative regulator of replication initiation, which contributes to regulation of DNA replication and ensures that replication initiation occurs exactly once per chromosome per cell cycle. Binds to pairs of hemimethylated GATC sequences in the oriC region, thus preventing assembly of replication proteins and re-initiation at newly replicated origins. Repression is relieved when the region becomes fully methylated. The chain is Negative modulator of initiation of replication from Pseudoalteromonas translucida (strain TAC 125).